Here is an 89-residue protein sequence, read N- to C-terminus: Small ribosomal subunit protein uS15 (89 aa).

This sequence belongs to the universal ribosomal protein uS15 family. In terms of assembly, part of the 30S ribosomal subunit. Forms a bridge to the 50S subunit in the 70S ribosome, contacting the 23S rRNA.

Its function is as follows. One of the primary rRNA binding proteins, it binds directly to 16S rRNA where it helps nucleate assembly of the platform of the 30S subunit by binding and bridging several RNA helices of the 16S rRNA. Forms an intersubunit bridge (bridge B4) with the 23S rRNA of the 50S subunit in the ribosome. In Lysinibacillus sphaericus (strain C3-41), this protein is Small ribosomal subunit protein uS15.